We begin with the raw amino-acid sequence, 791 residues long: Nuclear cap-binding protein subunit 1-B (791 aa).

The segment at 1 to 24 is disordered; sequence MSRRRHSDENDGGQPHKRRRTSEP. Residues 28–240 enclose the MIF4G domain; the sequence is EDRLESLICR…CLWAQVQKLK (213 aa). A coiled-coil region spans residues 641 to 714; it reads LHSTIRKMNK…SEQKNLFLVI (74 aa). The tract at residues 664–687 is disordered; the sequence is QRLAKQHKHRDSDDNDEDSGRKDG.

It belongs to the NCBP1 family. In terms of assembly, component of the nuclear cap-binding complex (CBC), a heterodimer composed of ncbp1/cbp80 and ncbp2/cbp20 that interacts with m7GpppG-capped RNA. Component of an alternative nuclear cap-binding complex (CBC) composed of ncbp1/cbp80 and ncbp3.

Its subcellular location is the nucleus. The protein resides in the cytoplasm. Component of the cap-binding complex (CBC), which binds cotranscriptionally to the 5'-cap of pre-mRNAs and is involved in various processes such as pre-mRNA splicing, translation regulation, nonsense-mediated mRNA decay, RNA-mediated gene silencing (RNAi) by microRNAs (miRNAs) and mRNA export. The CBC complex is involved in mRNA export from the nucleus, leading to the recruitment of the mRNA export machinery to the 5'-end of mRNA and to mRNA export in a 5' to 3' direction through the nuclear pore. The CBC complex is also involved in mediating U snRNA and intronless mRNAs export from the nucleus. The CBC complex is essential for a pioneer round of mRNA translation, before steady state translation when the CBC complex is replaced by cytoplasmic cap-binding protein eIF4E. The pioneer round of mRNA translation mediated by the CBC complex plays a central role in nonsense-mediated mRNA decay (NMD), NMD only taking place in mRNAs bound to the CBC complex, but not on eIF4E-bound mRNAs. The CBC complex enhances NMD in mRNAs containing at least one exon-junction complex (EJC), promoting the interaction between UPF1 and UPF2. The CBC complex is also involved in 'failsafe' NMD, which is independent of the EJC complex, while it does not participate in Staufen-mediated mRNA decay (SMD). During cell proliferation, the CBC complex is also involved in microRNAs (miRNAs) biogenesis via its interaction with SRRT/ARS2 and is required for miRNA-mediated RNA interference. The CBC complex also acts as a negative regulator of parn, thereby acting as an inhibitor of mRNA deadenylation. In the CBC complex, NCBP1/CBP80 does not bind directly capped RNAs (m7GpppG-capped RNA) but is required to stabilize the movement of the N-terminal loop of NCBP2/CBP20 and lock the CBC into a high affinity cap-binding state with the cap structure. Associates with NCBP3 to form an alternative cap-binding complex (CBC) which plays a key role in mRNA export. The conventional CBC with NCBP2 binds both small nuclear RNA (snRNA) and messenger (mRNA) and is involved in their export from the nucleus whereas the alternative CBC with NCBP3 does not bind snRNA and associates only with mRNA thereby playing a role only in mRNA export. The protein is Nuclear cap-binding protein subunit 1-B (ncbp1-b) of Xenopus laevis (African clawed frog).